Here is a 416-residue protein sequence, read N- to C-terminus: Multifunctional CCA protein (416 aa).

Residues glycine 8 and arginine 11 each coordinate ATP. The CTP site is built by glycine 8 and arginine 11. Aspartate 21 and aspartate 23 together coordinate Mg(2+). The ATP site is built by arginine 91, arginine 138, and arginine 141. CTP-binding residues include arginine 91, arginine 138, and arginine 141. In terms of domain architecture, HD spans 229-331 (TGLHQELVSD…YELLQRCDAF (103 aa)).

Belongs to the tRNA nucleotidyltransferase/poly(A) polymerase family. Bacterial CCA-adding enzyme type 1 subfamily. Monomer. Can also form homodimers and oligomers. It depends on Mg(2+) as a cofactor. Ni(2+) is required as a cofactor.

The enzyme catalyses a tRNA precursor + 2 CTP + ATP = a tRNA with a 3' CCA end + 3 diphosphate. It catalyses the reaction a tRNA with a 3' CCA end + 2 CTP + ATP = a tRNA with a 3' CCACCA end + 3 diphosphate. Its function is as follows. Catalyzes the addition and repair of the essential 3'-terminal CCA sequence in tRNAs without using a nucleic acid template. Adds these three nucleotides in the order of C, C, and A to the tRNA nucleotide-73, using CTP and ATP as substrates and producing inorganic pyrophosphate. tRNA 3'-terminal CCA addition is required both for tRNA processing and repair. Also involved in tRNA surveillance by mediating tandem CCA addition to generate a CCACCA at the 3' terminus of unstable tRNAs. While stable tRNAs receive only 3'-terminal CCA, unstable tRNAs are marked with CCACCA and rapidly degraded. In Xylella fastidiosa (strain 9a5c), this protein is Multifunctional CCA protein.